Here is a 720-residue protein sequence, read N- to C-terminus: Denticleless protein homolog (720 aa).

3 WD repeats span residues 43–85 (GMPV…TTKL), 92–131 (AHSNAVFDLAWVPGEHRIVTASGDQTAKVWDVRAGELLGI), and 134–174 (GHQC…KDGF). The short motif at 164-167 (WDTR) is the DDB1-binding motif element. The short motif at 193-200 (PSKLRKKR) is the Nuclear localization signal element. WD repeat units follow at residues 211–250 (DFQQSVTVVLLQDEHTLISAGAVDGVIKVWDLRKNYAAYR), 266–305 (TRKLGYSSLVLDSTGANLFANCTDDSIYMFNMTSLKTFPV), 310–351 (GHQN…LPPR), and 355–395 (GHSQ…EEEK). Residues 240–243 (WDLR) carry the DDB1-binding motif motif. Disordered stretches follow at residues 411–437 (KPEEQRGAGRSASPQSTPAKAFSVGSP), 476–495 (PAKLSGASPRTSPKLVPSSK), 528–552 (QSLLETSSTPKAQHSQAEKRAKRRL), and 607–698 (NEHE…TSPK). The segment covering 528 to 542 (QSLLETSSTPKAQHS) has biased composition (polar residues). Basic and acidic residues-rich tracts occupy residues 543 to 552 (QAEKRAKRRL) and 642 to 660 (CERDSDVVDKENSSPERKN).

The protein belongs to the WD repeat cdt2 family. As to quaternary structure, component of the DCX(DTL) E3 ubiquitin ligase complex, at least composed of CUL4 (CUL4A or CUL4B), DDB1, DTL/CDT2 and RBX1.

The protein localises to the nucleus. Its subcellular location is the cytoplasm. It is found in the cytoskeleton. It localises to the microtubule organizing center. The protein resides in the centrosome. The protein localises to the chromosome. The protein operates within protein modification; protein ubiquitination. In terms of biological role, substrate-specific adapter of a DCX (DDB1-CUL4-X-box) E3 ubiquitin-protein ligase complex required for cell cycle control, DNA damage response and translesion DNA synthesis. The DCX(DTL) complex, also named CRL4(CDT2) complex, mediates the polyubiquitination and subsequent degradation of CDT1, CDKN1A/p21(CIP1), KMT5A and SDE2. CDT1 degradation in response to DNA damage is necessary to ensure proper cell cycle regulation of DNA replication. CDKN1A/p21(CIP1) degradation during S phase or following UV irradiation is essential to control replication licensing. KMT5A degradation is also important for a proper regulation of mechanisms such as TGF-beta signaling, cell cycle progression, DNA repair and cell migration. Most substrates require their interaction with PCNA for their polyubiquitination: substrates interact with PCNA via their PIP-box, and those containing the 'K+4' motif in the PIP box, recruit the DCX(DTL) complex, leading to their degradation. In undamaged proliferating cells, the DCX(DTL) complex also promotes the 'Lys-164' monoubiquitination of PCNA, thereby being involved in PCNA-dependent translesion DNA synthesis. May play a role in the regulation of the circadian clock. The polypeptide is Denticleless protein homolog (DTL) (Gallus gallus (Chicken)).